A 126-amino-acid polypeptide reads, in one-letter code: Fluoride-specific ion channel FluC (126 aa).

Transmembrane regions (helical) follow at residues 2–22, 37–57, 65–85, and 101–121; these read LTFA…GAWL, WGTL…VALI, AWIR…FSTF, and AAAY…LATV. Residues Gly-77 and Thr-80 each coordinate Na(+).

This sequence belongs to the fluoride channel Fluc/FEX (TC 1.A.43) family.

The protein localises to the cell inner membrane. The catalysed reaction is fluoride(in) = fluoride(out). With respect to regulation, na(+) is not transported, but it plays an essential structural role and its presence is essential for fluoride channel function. Its function is as follows. Fluoride-specific ion channel. Important for reducing fluoride concentration in the cell, thus reducing its toxicity. This is Fluoride-specific ion channel FluC from Bordetella parapertussis (strain 12822 / ATCC BAA-587 / NCTC 13253).